We begin with the raw amino-acid sequence, 1791 residues long: MGTRDSNNRTFSEIVGLIKSWLPWRSEPATVSRDFWMPDQSCRVCYECDCQFTLINRRHHCRHCGRVFCGKCTANSIPFAPSDLRTPREDWERIRVCNYCFRQWEQGDGGPHVSNITELSTSPSETSLLSSKTSTTANSSSFALGSMPGLIGLNQRVHHGSDVSLHGVSSMETSVTKQGKETSRRSSFIATDVEDPSRFALNSIRSDDEYDEYGAYQTDIETSHSPRANEYYGPMEYNGMGIDDVPCKHLGGETADQKSLSGSPLIHQCLESLIREGSEQFQKKSEHDGRDECEASSPADISDDQVVEPVDFENNGLLWVPPEPENEEDERESALFDEEDNEGDASGEWGYLRPSTSFGSGEYRGEDRTTEEHKKAMKNVVDGHFRALLAQLLQVENISVSDEEGKESWLEIITSLSWEAANLLKPDMSKSGGMDPGGYVKVKCLASGFRHDSMVVKGVVCKKNVVNRRMSTKIEKARLLILGGGLEYQRVSNQLSSFDTLLQQEKDHLKMAVAKIHAERPNILLVEKSVSRFAQEYLLAKDISLVLNIKRPLLDRIARCTGAQIIPSVDHLSSQKLGYCENFRVDRYPEEHGSTGQVGKKVVKTLMYFEHCPKPLGFTILLRGANEDELKKVKHVVQYGVFAAYHLALETSFLADEGASPELPLNSPITVALPDKSTSIERSISTVPGFTVSTYEKSPTMLSCAEPQRANSVPVSELLSTTTNLSIQKDIPPIPYGSGWQAREINPSFVFSRHNISLNLPDRVIESRNSDLSGRSVPVDTPADKSNPIVVADETTNNSLHLSGQGFVRKSSQIGTSIMVENQDNGSELTIAQQQNNEKPKETQSQKEEFPPSPSDHQSILVSLSSRSVWKGTVCERSHLFRIKYYGSFDKPLGRFLRDHLFDQSYRCRSCEMPSEAHVHCYTHRQGSLTISVKKLQDYLLPGEKEGKIWMWHRCLRCPRLNGFPPATLRVVMSDAAWGLSFGKFLELSFSNHAAASRVACCGHSLHRDCLRFYGFGNMVACFRYATIDVHSVYLPPSILSFNYENQDWIQRETDEVIERAELLFSEVLNAISQIAEKGFRRRIGELEEVLQKEKAEFEENMQKILHREVNEGQPLVDILELYRIHRQLLFQSYMWDHRLINASTLHKLENSDDTKREENEKPPLAKSQTLPEMNAGTNSLLTGSEVNLNPDGDSTGDTGSLNNVQKEADTNSDLYQEKDDGGEVSPSKTLPDTSYPLENKVDVRRTQSDGQIVMKNLSATLDAAWIGERQTSVEIPTNNKVSLPPSTMSNSSTFPPISEGLMPIDLPEQQNEFKVAYPVSPALPSKNYENSEDSVSWLSVPFLNFYRSINKNFLLSSQKLDTFGEHSPIYISSFREAELQGGPRLLLPVGLNDIVVPVYDDEPTSMIAYALMSPEYQRQTSAEGESLVSYPSELNIPRPVDDTIFDPSRSNGSVDESILSISSSRSTSLLDPLSYTKALHARVSYGEDGTLGKVKYTVTCYYAKRFEALRGICLPSELEYIRSLSRCKKWGAQGGKSNVFFAKTLDDRFIIKQVTKTELESFIKFAPAYFKYLSESISTKSPTCLAKILGIYQVATKQLKSGKETKMDVLIMENLLFGRTVKRLYDLKGSSRARYNPDSSGSNKVLLDQNLIEAMPTSPIFVGNKAKRLLERAVWNDTAFLALGDVMDYSLLVGVDEEKNELVLGIIDFLRQYTWDKHLESWVKFTGILGGPKNEAPTVISPKQYKRRFRKAMTTYFLMVPDQWSPPNVVANNSKSDQPEETSQAGTQAE.

The FYVE-type zinc finger occupies 39–105; that stretch reads DQSCRVCYEC…VCNYCFRQWE (67 aa). Zn(2+) is bound by residues cysteine 45, cysteine 48, cysteine 61, cysteine 64, cysteine 69, cysteine 72, cysteine 97, and cysteine 100. Disordered regions lie at residues 166–186, 279–370, 770–790, and 834–859; these read HGVS…SRRS, EQFQ…DRTT, SDLS…NPIV, and QQNN…DHQS. Residues 279 to 293 are compositionally biased toward basic and acidic residues; sequence EQFQKKSEHDGRDEC. Residues 324-345 are compositionally biased toward acidic residues; sequence PENEEDERESALFDEEDNEGDA. Basic and acidic residues predominate over residues 838 to 850; the sequence is EKPKETQSQKEEF. A coiled-coil region spans residues 1077–1111; sequence EKGFRRRIGELEEVLQKEKAEFEENMQKILHREVN. Residues 1151–1164 are compositionally biased toward basic and acidic residues; the sequence is NSDDTKREENEKPP. The disordered stretch occupies residues 1151–1242; sequence NSDDTKREEN…DTSYPLENKV (92 aa). 2 stretches are compositionally biased toward polar residues: residues 1167–1188 and 1196–1206; these read KSQT…SEVN and TGDTGSLNNVQ. The region spanning 1433–1758 is the PIPK domain; sequence SELNIPRPVD…RFRKAMTTYF (326 aa). Positions 1769–1791 are disordered; the sequence is NVVANNSKSDQPEETSQAGTQAE. Positions 1771-1791 are enriched in polar residues; that stretch reads VANNSKSDQPEETSQAGTQAE.

In terms of assembly, component of the PI(3,5)P2 regulatory complex at least composed of ATG18, SAC/FIG4, FAB1 and VAC14. Requires Mg(2+) as cofactor. Mn(2+) is required as a cofactor. Ubiquitous with highest expression levels in the root hair zone, pollen, and stamens.

It is found in the endosome membrane. The enzyme catalyses a 1,2-diacyl-sn-glycero-3-phospho-(1D-myo-inositol-3-phosphate) + ATP = a 1,2-diacyl-sn-glycero-3-phospho-(1D-myo-inositol-3,5-bisphosphate) + ADP + H(+). Functionally, the PI(3,5)P2 regulatory complex regulates both the synthesis and turnover of phosphatidylinositol 3,5-bisphosphate (PtdIns(3,5)P2). Catalyzes the phosphorylation of phosphatidylinositol 3-phosphate on the fifth hydroxyl of the myo-inositol ring, to form phosphatidylinositol 3,5-bisphosphate. Plays an important role in maintenance of endomembrane homeostasis including endocytosis, vacuole formation, and vacuolar acidification processes. Required for development of viable pollen. Might mediate recycling of auxin transporters. In Arabidopsis thaliana (Mouse-ear cress), this protein is 1-phosphatidylinositol-3-phosphate 5-kinase FAB1B (FAB1B).